Reading from the N-terminus, the 956-residue chain is Plasma membrane ATPase 1 (956 aa).

The Cytoplasmic segment spans residues 1–65 (MAEKPEVLDA…EKKESKFLKF (65 aa)). A helical transmembrane segment spans residues 66-85 (LGFMWNPLSWVMEAAAIMAI). The Extracellular segment spans residues 86–97 (ALANGGGKPPDW). A helical membrane pass occupies residues 98-118 (QDFVGIITLLIINSTISFIEE). At 119–247 (NNAGNAAAAL…GHFQKVLTAI (129 aa)) the chain is on the cytoplasmic side. A helical transmembrane segment spans residues 248–268 (GNFCICSIAVGMIIEIIVMYP). Topologically, residues 269-277 (IQHRKYRPG) are extracellular. The chain crosses the membrane as a helical span at residues 278–295 (IDNLLVLLIGGIPIAMPT). Residues 296 to 646 (VLSVTMAIGS…LTSRAIFQRM (351 aa)) are Cytoplasmic-facing. D333 acts as the 4-aspartylphosphate intermediate in catalysis. The Mg(2+) site is built by D592 and D596. The chain crosses the membrane as a helical span at residues 647-666 (KNYTIYAVSITIRIVLGFML). Over 667–674 (LALIWKFD) the chain is Extracellular. A helical membrane pass occupies residues 675-697 (FPPFMVLIIAILNDGTIMTISKD). Residues 698–713 (RVKPSPLPDSWKLAEI) lie on the Cytoplasmic side of the membrane. The helical transmembrane segment at 714-734 (FTTGVVLGGYLAMMTVIFFWA) threads the bilayer. The Extracellular segment spans residues 735 to 759 (AYKTNFFPRIFGVSTLEKTATDDFR). The helical transmembrane segment at 760–780 (KLASAIYLQVSTISQALIFVT) threads the bilayer. At 781-792 (RSRSWSFVERPG) the chain is on the cytoplasmic side. The helical transmembrane segment at 793–813 (LLLVFAFFVAQLVATLIAVYA) threads the bilayer. At 814 to 821 (NWSFAAIE) the chain is on the extracellular side. The chain crosses the membrane as a helical span at residues 822-842 (GIGWGWAGVIWLYNIVTYIPL). At 843-956 (DLIKFLIRYA…IETIQQSYTV (114 aa)) the chain is on the cytoplasmic side.

It belongs to the cation transport ATPase (P-type) (TC 3.A.3) family. Type IIIA subfamily. In terms of assembly, possibly exists as a homodimer or a homotrimer.

It localises to the cell membrane. The catalysed reaction is ATP + H2O + H(+)(in) = ADP + phosphate + 2 H(+)(out). The plasma membrane ATPase of plants and fungi is a hydrogen ion pump. The proton gradient it generates drives the active transport of nutrients by H(+)-symport. The resulting external acidification and/or internal alkinization may mediate growth responses. The chain is Plasma membrane ATPase 1 (LHA1) from Solanum lycopersicum (Tomato).